The chain runs to 250 residues: Phosphoribosylaminoimidazole-succinocarboxamide synthase (250 aa).

The protein belongs to the SAICAR synthetase family.

The enzyme catalyses 5-amino-1-(5-phospho-D-ribosyl)imidazole-4-carboxylate + L-aspartate + ATP = (2S)-2-[5-amino-1-(5-phospho-beta-D-ribosyl)imidazole-4-carboxamido]succinate + ADP + phosphate + 2 H(+). It participates in purine metabolism; IMP biosynthesis via de novo pathway; 5-amino-1-(5-phospho-D-ribosyl)imidazole-4-carboxamide from 5-amino-1-(5-phospho-D-ribosyl)imidazole-4-carboxylate: step 1/2. This chain is Phosphoribosylaminoimidazole-succinocarboxamide synthase, found in Bifidobacterium longum subsp. infantis (strain ATCC 15697 / DSM 20088 / JCM 1222 / NCTC 11817 / S12).